A 133-amino-acid polypeptide reads, in one-letter code: Small ribosomal subunit protein uS8 (133 aa).

Belongs to the universal ribosomal protein uS8 family. In terms of assembly, part of the 30S ribosomal subunit. Contacts proteins S5 and S12.

One of the primary rRNA binding proteins, it binds directly to 16S rRNA central domain where it helps coordinate assembly of the platform of the 30S subunit. This Prochlorococcus marinus (strain MIT 9303) protein is Small ribosomal subunit protein uS8.